Consider the following 969-residue polypeptide: Lateral signaling target protein 2 homolog (969 aa).

Residue K87 forms a Glycyl lysine isopeptide (Lys-Gly) (interchain with G-Cter in ubiquitin) linkage. Disordered stretches follow at residues 290 to 323 (QDGEFPTSSTNDPSASTGPDSQTEELEKEKGVEE), 336 to 360 (SVWKEEEEKQVLPESSSESEEEEPI), 390 to 437 (STLL…YHDD), and 715 to 777 (RSEC…DMSE). The segment covering 295–310 (PTSSTNDPSASTGPDS) has biased composition (polar residues). The segment covering 336 to 346 (SVWKEEEEKQV) has biased composition (basic and acidic residues). Positions 391-402 (TLLSPPSQNQSP) are enriched in polar residues. Over residues 411-423 (GSSLEGSSATSST) the composition is skewed to low complexity. Residues 715-729 (RSECFGKQSKDDNRK) show a composition bias toward basic and acidic residues. Composition is skewed to low complexity over residues 732–745 (SSSQESPLSSVPSS) and 756–769 (SLSSSYAPSPVSSL). Residues 899 to 959 (DEACNSCIAC…VCTHCYMFHV (61 aa)) form an FYVE-type zinc finger. C905, C908, C921, C924, C929, C932, C951, and C954 together coordinate Zn(2+).

The protein belongs to the lst-2 family. Monoubiquitination at Lys-87 prevents binding to phosphatidylinositol 3-phosphate (PI3P) and localization to early endosome membranes.

The protein resides in the cytoplasm. Its subcellular location is the cytosol. The protein localises to the early endosome membrane. Its function is as follows. Negative regulator of epidermal growth factor receptor (EGFR) signaling. Acts by promoting EGFR degradation in endosomes when not monoubiquitinated. This Danio rerio (Zebrafish) protein is Lateral signaling target protein 2 homolog (zfyve28).